A 338-amino-acid chain; its full sequence is Ketol-acid reductoisomerase (NADP(+)) (338 aa).

Residues 1 to 181 (MRVFYDKDCD…GGGRTGIIET (181 aa)) enclose the KARI N-terminal Rossmann domain. Residues 24-27 (YGSQ), Arg47, Ser50, Thr52, and 82-85 (DEFQ) each bind NADP(+). His107 is a catalytic residue. Residue Gly133 coordinates NADP(+). A KARI C-terminal knotted domain is found at 182–327 (TFKDETETDL…EKLRAMMPWI (146 aa)). Residues Asp190, Glu194, Glu226, and Glu230 each coordinate Mg(2+). Ser251 lines the substrate pocket.

Belongs to the ketol-acid reductoisomerase family. The cofactor is Mg(2+).

The enzyme catalyses (2R)-2,3-dihydroxy-3-methylbutanoate + NADP(+) = (2S)-2-acetolactate + NADPH + H(+). It carries out the reaction (2R,3R)-2,3-dihydroxy-3-methylpentanoate + NADP(+) = (S)-2-ethyl-2-hydroxy-3-oxobutanoate + NADPH + H(+). The protein operates within amino-acid biosynthesis; L-isoleucine biosynthesis; L-isoleucine from 2-oxobutanoate: step 2/4. It functions in the pathway amino-acid biosynthesis; L-valine biosynthesis; L-valine from pyruvate: step 2/4. Functionally, involved in the biosynthesis of branched-chain amino acids (BCAA). Catalyzes an alkyl-migration followed by a ketol-acid reduction of (S)-2-acetolactate (S2AL) to yield (R)-2,3-dihydroxy-isovalerate. In the isomerase reaction, S2AL is rearranged via a Mg-dependent methyl migration to produce 3-hydroxy-3-methyl-2-ketobutyrate (HMKB). In the reductase reaction, this 2-ketoacid undergoes a metal-dependent reduction by NADPH to yield (R)-2,3-dihydroxy-isovalerate. This chain is Ketol-acid reductoisomerase (NADP(+)), found in Pseudomonas paraeruginosa (strain DSM 24068 / PA7) (Pseudomonas aeruginosa (strain PA7)).